A 272-amino-acid polypeptide reads, in one-letter code: Formamidopyrimidine-DNA glycosylase (272 aa).

The Schiff-base intermediate with DNA role is filled by Pro2. The Proton donor role is filled by Glu3. The active-site Proton donor; for beta-elimination activity is Lys56. DNA contacts are provided by His89, Arg108, and Lys149. An FPG-type zinc finger spans residues 234 to 268; sequence LAYGRAGEMCVNCETPLENLKLGQRASVFCPQCQP. Catalysis depends on Arg258, which acts as the Proton donor; for delta-elimination activity.

Belongs to the FPG family. In terms of assembly, monomer. Requires Zn(2+) as cofactor.

It carries out the reaction Hydrolysis of DNA containing ring-opened 7-methylguanine residues, releasing 2,6-diamino-4-hydroxy-5-(N-methyl)formamidopyrimidine.. The catalysed reaction is 2'-deoxyribonucleotide-(2'-deoxyribose 5'-phosphate)-2'-deoxyribonucleotide-DNA = a 3'-end 2'-deoxyribonucleotide-(2,3-dehydro-2,3-deoxyribose 5'-phosphate)-DNA + a 5'-end 5'-phospho-2'-deoxyribonucleoside-DNA + H(+). Its function is as follows. Involved in base excision repair of DNA damaged by oxidation or by mutagenic agents. Acts as a DNA glycosylase that recognizes and removes damaged bases. Has a preference for oxidized purines, such as 7,8-dihydro-8-oxoguanine (8-oxoG). Has AP (apurinic/apyrimidinic) lyase activity and introduces nicks in the DNA strand. Cleaves the DNA backbone by beta-delta elimination to generate a single-strand break at the site of the removed base with both 3'- and 5'-phosphates. This is Formamidopyrimidine-DNA glycosylase from Acinetobacter baylyi (strain ATCC 33305 / BD413 / ADP1).